The chain runs to 294 residues: Ribosomal RNA small subunit methyltransferase H (294 aa).

Residues 36-38 (GGH), Asp55, Phe82, Asp97, and Gln104 each bind S-adenosyl-L-methionine. Residues 265–285 (KPTVATDDEQNRNPRSRSAKW) form a disordered region.

The protein belongs to the methyltransferase superfamily. RsmH family.

Its subcellular location is the cytoplasm. The catalysed reaction is cytidine(1402) in 16S rRNA + S-adenosyl-L-methionine = N(4)-methylcytidine(1402) in 16S rRNA + S-adenosyl-L-homocysteine + H(+). In terms of biological role, specifically methylates the N4 position of cytidine in position 1402 (C1402) of 16S rRNA. This Synechococcus sp. (strain CC9902) protein is Ribosomal RNA small subunit methyltransferase H.